The sequence spans 144 residues: Large ribosomal subunit protein uL15 (144 aa).

A disordered region spans residues Met-1 to Leu-57. Residues Arg-21–Ala-31 show a composition bias toward gly residues.

Belongs to the universal ribosomal protein uL15 family. Part of the 50S ribosomal subunit.

Its function is as follows. Binds to the 23S rRNA. The sequence is that of Large ribosomal subunit protein uL15 from Paraburkholderia xenovorans (strain LB400).